Reading from the N-terminus, the 511-residue chain is MASDSSFPGASSNVAEYSVSEISGALKRTVEDTFGHVRVRGEISGYRGPHSSGHAYFALKDDRARLEAVIWRGSMSRLRFRPEEGMEVIATGKLTTYPGSSKYQIVIEQMEPAGAGALMALLEERKQRLAAEGLFDPTLKQLLPFMPRVIGVVTSPTGAVIRDIIHRISDRYPLRVIVWPVRVQGDTCGPEVATAVNGFNTLPDDGPIPRPDVLIVARGGGSLEDLWGFNDEIVVRAVAASHIPVISAVGHETDWTLIDLAADMRAPTPTGAAEMAVPVKADLQASLASQSARLSSAMSRFFDQKRQAHRAAARAMPSADQLLALPRRRFDEAASRLTRALFVNTQKKRVHFDGHARQLSPRLLQRRLVELERGVTMLGQRLPRALEAFLRERRTAFTHRANRLSPEPILRRTRLTGSTLEQLDRRRDQAVRLLIERVKRRSQELDRLMRTLSYESVLERGFAVVFDAQGKPVKQAAAVSPGDALSVRFRDGDVGVVARAGLTIPDPTKGQ.

Belongs to the XseA family. In terms of assembly, heterooligomer composed of large and small subunits.

It is found in the cytoplasm. The enzyme catalyses Exonucleolytic cleavage in either 5'- to 3'- or 3'- to 5'-direction to yield nucleoside 5'-phosphates.. Bidirectionally degrades single-stranded DNA into large acid-insoluble oligonucleotides, which are then degraded further into small acid-soluble oligonucleotides. In Brucella abortus (strain S19), this protein is Exodeoxyribonuclease 7 large subunit.